Reading from the N-terminus, the 320-residue chain is MLDAPDTAVLAVNLGTPETPTAPAVRRYLAEFLSDPRVVSIPALLWQPLLRGLILPLRSSRSAAKYAQVWLPDGSPLMVYTRQLAQAMQALLPSLTVRHAMRYGEPALGSELDCLAAEGARRIVVLPLYPQYSTTTTASVEDRVDAWQRRNPGVTVSLVRDYSVDPGWVEAVAGSIRRYWEQQGRGQTLMFSFHGIPQRLADGGDPYPQRCEASARAIANALGLASDEWQLGYQSRFGRERWLQPYAEPSLWALAESGVKQIDVVCPGFATDCLETLEEVAMGFTETLAERGATMRYIPCLNAEPDHARALARLAVASLA.

Positions 194 and 275 each coordinate Fe cation.

The protein belongs to the ferrochelatase family.

It localises to the cytoplasm. The enzyme catalyses heme b + 2 H(+) = protoporphyrin IX + Fe(2+). It functions in the pathway porphyrin-containing compound metabolism; protoheme biosynthesis; protoheme from protoporphyrin-IX: step 1/1. Catalyzes the ferrous insertion into protoporphyrin IX. The protein is Ferrochelatase of Stenotrophomonas maltophilia (strain R551-3).